An 82-amino-acid polypeptide reads, in one-letter code: Mu-conotoxin MrVIA (82 aa).

A signal peptide spans 1-22; sequence MKLTCMMIVAVLFLTAWTLVMA. Positions 23 to 49 are excised as a propeptide; the sequence is DDSNNGLANHFSKSRDEMEDPEASKLE. 3 disulfides stabilise this stretch: Cys53-Cys71, Cys60-Cys76, and Cys70-Cys81.

Expressed by the venom duct.

It is found in the secreted. Its function is as follows. MuO-conotoxins are gating-modifier toxins that inhibit sodium current by trapping the domain II voltage sensor in the closed position to prevent opening of the sodium channel. This toxin inhibits rNav1.2/SCN2A (IC(50)=532 nM), rNav1.4/SCN4A (IC(50)=438 nM) and rNav1.7/SCN9A (IC(50)=345 nM). It blocks Nav channels by interacting mainly with the C-terminal part of the pore loop of domain-3. It does not bind on site 1. At small concentration, this toxin also acts as a calcium current agonist, whereas at higher doses it blocks fast-inactivating calcium current. This chain is Mu-conotoxin MrVIA, found in Conus marmoreus (Marble cone).